A 434-amino-acid polypeptide reads, in one-letter code: E3 ubiquitin-protein ligase siah-1 (434 aa).

The disordered stretch occupies residues 27–88; the sequence is FEEDENAGPE…NGNTPSVTIP (62 aa). The segment covering 43-55 has biased composition (low complexity); sequence SSSSASSQRSSAS. Residues 74 to 88 show a composition bias toward polar residues; sequence MSNNQNGNTPSVTIP. An RING-type; degenerate zinc finger spans residues 171-206; sequence CPVCLEYMLPPYMQCPSGHLVCSNCRPKLQCCPTCR. Residues 220–415 form an SBD region; that stretch reads IANTVRFPCK…LGINVTISRI (196 aa). The SIAH-type; degenerate zinc finger occupies 223-283; sequence TVRFPCKFSN…VMDHLKKVHK (61 aa). Zn(2+) contacts are provided by Cys-228, Cys-235, His-247, Cys-251, Cys-258, Cys-265, His-277, and His-282.

The protein belongs to the SINA (Seven in absentia) family. As to quaternary structure, interacts with tir-1.

It carries out the reaction S-ubiquitinyl-[E2 ubiquitin-conjugating enzyme]-L-cysteine + [acceptor protein]-L-lysine = [E2 ubiquitin-conjugating enzyme]-L-cysteine + N(6)-ubiquitinyl-[acceptor protein]-L-lysine.. The protein operates within protein modification; protein ubiquitination. Functionally, E3 ubiquitin-protein ligase that mediates ubiquitination and subsequent proteasomal degradation of target proteins. E3 ubiquitin ligases accept ubiquitin from an E2 ubiquitin-conjugating enzyme in the form of a thioester and then directly transfers the ubiquitin to targeted substrates. It probably triggers the ubiquitin-mediated degradation of different substrates. This is E3 ubiquitin-protein ligase siah-1 from Caenorhabditis briggsae.